Consider the following 264-residue polypeptide: MEYNLKDKYILQLNEKEKALETRDLNIFYGEKQALFDGNLQFERYKITSLIGASGSGKSTFLRSLNRMNEGVADVKGSILYRGIDINSPKINVYEMRKYIGMVFQRPNPFSKSIYENITFALKENGIKDKEKLAEIVETSLKQAALWDEVKDDLNKSALALSGGQQQRLCIARAIAMKPDILLLDEPASALDPISTAKIEETLLELKEKYTLIIVTHNMQQASRISDYTAFFHLGNVIEYNKTKNIFTNPKIKLTEDYISGNFG.

The 240-residue stretch at 20-259 (LETRDLNIFY…PKIKLTEDYI (240 aa)) folds into the ABC transporter domain. 52–59 (GASGSGKS) provides a ligand contact to ATP.

Belongs to the ABC transporter superfamily. Phosphate importer (TC 3.A.1.7) family. The complex is composed of two ATP-binding proteins (PstB), two transmembrane proteins (PstC and PstA) and a solute-binding protein (PstS).

Its subcellular location is the cell membrane. It carries out the reaction phosphate(out) + ATP + H2O = ADP + 2 phosphate(in) + H(+). In terms of biological role, part of the ABC transporter complex PstSACB involved in phosphate import. Responsible for energy coupling to the transport system. The polypeptide is Phosphate import ATP-binding protein PstB 1 (Ligilactobacillus salivarius (strain UCC118) (Lactobacillus salivarius)).